Consider the following 213-residue polypeptide: Protein-L-isoaspartate O-methyltransferase 1 (213 aa).

Ser-64 is a catalytic residue.

It belongs to the methyltransferase superfamily. L-isoaspartyl/D-aspartyl protein methyltransferase family.

The protein resides in the cytoplasm. The enzyme catalyses [protein]-L-isoaspartate + S-adenosyl-L-methionine = [protein]-L-isoaspartate alpha-methyl ester + S-adenosyl-L-homocysteine. In terms of biological role, catalyzes the methyl esterification of L-isoaspartyl residues in peptides and proteins that result from spontaneous decomposition of normal L-aspartyl and L-asparaginyl residues. It plays a role in the repair and/or degradation of damaged proteins. The chain is Protein-L-isoaspartate O-methyltransferase 1 from Nitrosococcus oceani (strain ATCC 19707 / BCRC 17464 / JCM 30415 / NCIMB 11848 / C-107).